A 387-amino-acid chain; its full sequence is 3-ketoacyl-CoA thiolase (387 aa).

Cysteine 91 functions as the Acyl-thioester intermediate in the catalytic mechanism. Active-site proton acceptor residues include histidine 343 and cysteine 373.

Belongs to the thiolase-like superfamily. Thiolase family. Heterotetramer of two alpha chains (FadB) and two beta chains (FadA).

The protein localises to the cytoplasm. The enzyme catalyses an acyl-CoA + acetyl-CoA = a 3-oxoacyl-CoA + CoA. It participates in lipid metabolism; fatty acid beta-oxidation. In terms of biological role, catalyzes the final step of fatty acid oxidation in which acetyl-CoA is released and the CoA ester of a fatty acid two carbons shorter is formed. Involved in the aerobic and anaerobic degradation of long-chain fatty acids. This is 3-ketoacyl-CoA thiolase from Escherichia coli O6:H1 (strain CFT073 / ATCC 700928 / UPEC).